We begin with the raw amino-acid sequence, 121 residues long: Two-component response regulator ORR8 (121 aa).

The Response regulatory domain maps to His-5–Ile-121. Asp-55 bears the 4-aspartylphosphate mark.

It belongs to the ARR family. Type-A subfamily. Two-component system major event consists of a His-to-Asp phosphorelay between a sensor histidine kinase (HK) and a response regulator (RR). In plants, the His-to-Asp phosphorelay involves an additional intermediate named Histidine-containing phosphotransfer protein (HPt). This multistep phosphorelay consists of a His-Asp-His-Asp sequential transfer of a phosphate group between first a His and an Asp of the HK protein, followed by the transfer to a conserved His of the HPt protein and finally the transfer to an Asp in the receiver domain of the RR protein. Expressed in mature leaves, and at low levels in roots, shoots and flowers.

Functionally, functions as a response regulator involved in His-to-Asp phosphorelay signal transduction system. Phosphorylation of the Asp residue in the receiver domain activates the ability of the protein to promote the transcription of target genes. Type-A response regulators seem to act as negative regulators of the cytokinin signaling. The chain is Two-component response regulator ORR8 from Oryza sativa subsp. indica (Rice).